The sequence spans 175 residues: Ribosome maturation factor RimM (175 aa).

The region spanning 96 to 172 is the PRC barrel domain; it reads PDTYYDHQLE…LIEIDPPDGL (77 aa).

Belongs to the RimM family. As to quaternary structure, binds ribosomal protein uS19.

The protein resides in the cytoplasm. In terms of biological role, an accessory protein needed during the final step in the assembly of 30S ribosomal subunit, possibly for assembly of the head region. Essential for efficient processing of 16S rRNA. May be needed both before and after RbfA during the maturation of 16S rRNA. It has affinity for free ribosomal 30S subunits but not for 70S ribosomes. This chain is Ribosome maturation factor RimM, found in Mycolicibacterium paratuberculosis (strain ATCC BAA-968 / K-10) (Mycobacterium paratuberculosis).